Here is a 410-residue protein sequence, read N- to C-terminus: LL-diaminopimelate aminotransferase (410 aa).

Substrate-binding residues include tyrosine 15 and glycine 42. Residues tyrosine 72, 108 to 109 (AK), tyrosine 132, asparagine 187, tyrosine 218, and 246 to 248 (SFS) each bind pyridoxal 5'-phosphate. The substrate site is built by lysine 109, tyrosine 132, and asparagine 187. N6-(pyridoxal phosphate)lysine is present on lysine 249. The pyridoxal 5'-phosphate site is built by arginine 257 and asparagine 292. The substrate site is built by asparagine 292 and arginine 388.

It belongs to the class-I pyridoxal-phosphate-dependent aminotransferase family. LL-diaminopimelate aminotransferase subfamily. As to quaternary structure, homodimer. Pyridoxal 5'-phosphate is required as a cofactor.

It catalyses the reaction (2S,6S)-2,6-diaminopimelate + 2-oxoglutarate = (S)-2,3,4,5-tetrahydrodipicolinate + L-glutamate + H2O + H(+). The protein operates within amino-acid biosynthesis; L-lysine biosynthesis via DAP pathway; LL-2,6-diaminopimelate from (S)-tetrahydrodipicolinate (aminotransferase route): step 1/1. Functionally, involved in the synthesis of meso-diaminopimelate (m-DAP or DL-DAP), required for both lysine and peptidoglycan biosynthesis. Catalyzes the direct conversion of tetrahydrodipicolinate to LL-diaminopimelate. Can also use m-DAP instead of LL-DAP as the amino-group donor. This chain is LL-diaminopimelate aminotransferase, found in Acetivibrio thermocellus (strain ATCC 27405 / DSM 1237 / JCM 9322 / NBRC 103400 / NCIMB 10682 / NRRL B-4536 / VPI 7372) (Clostridium thermocellum).